The chain runs to 494 residues: Folate-biopterin transporter (494 aa).

The next 12 helical transmembrane spans lie at 31 to 51, 64 to 84, 104 to 124, 133 to 153, 170 to 190, 197 to 217, 246 to 266, 284 to 303, 310 to 330, 346 to 366, 375 to 395, and 415 to 435; these read APSW…VLGL, LGLS…PWIL, SYLW…AAWV, VLLF…SLVV, LTWG…GALL, TVFA…FLIS, ILLP…ESAF, VRLV…QRFL, VIMG…LILI, LGDS…VLVL, IEAT…VLSF, and LALL…FLGL. A disordered region spans residues 441–461; that stretch reads PQVKDKTEKEDNPDDPGDRLV.

Belongs to the major facilitator superfamily. Folate-biopterin transporter (TC 2.A.71) family.

It is found in the cell membrane. In terms of biological role, mediates folate monoglutamate transport involved in tetrahydrofolate biosynthesis. It also mediates transport of antifolates, such as methotrexate and aminopterin. This Synechocystis sp. (strain ATCC 27184 / PCC 6803 / Kazusa) protein is Folate-biopterin transporter.